A 166-amino-acid chain; its full sequence is Ribosome-binding factor A (166 aa).

A disordered region spans residues 122 to 166 (LASTAEHAGDADPYRVDTEDDDDDTDGADAEARSDADVRRGPQSG). The segment covering 128–138 (HAGDADPYRVD) has biased composition (basic and acidic residues). Over residues 139–150 (TEDDDDDTDGAD) the composition is skewed to acidic residues. The span at 151–166 (AEARSDADVRRGPQSG) shows a compositional bias: basic and acidic residues.

It belongs to the RbfA family. As to quaternary structure, monomer. Binds 30S ribosomal subunits, but not 50S ribosomal subunits or 70S ribosomes.

The protein resides in the cytoplasm. One of several proteins that assist in the late maturation steps of the functional core of the 30S ribosomal subunit. Associates with free 30S ribosomal subunits (but not with 30S subunits that are part of 70S ribosomes or polysomes). Required for efficient processing of 16S rRNA. May interact with the 5'-terminal helix region of 16S rRNA. The chain is Ribosome-binding factor A from Saccharopolyspora erythraea (strain ATCC 11635 / DSM 40517 / JCM 4748 / NBRC 13426 / NCIMB 8594 / NRRL 2338).